Here is a 221-residue protein sequence, read N- to C-terminus: DNA replication complex GINS protein SLD5 (221 aa).

The protein belongs to the GINS4/SLD5 family. In terms of assembly, component of the GINS complex which is a heterotetramer of gins1/psf1, gins2/psf2, gins3/psf3 and gins4/sld5. Component of the CMG helicase complex, composed of the mcm2-7 complex, the GINS complex and cdc45.

It is found in the nucleus. The protein resides in the chromosome. It localises to the cytoplasm. In terms of biological role, required for initiation of chromosomal DNA replication. Core component of CDC45-MCM-GINS (CMG) helicase, the molecular machine that unwinds template DNA during replication, and around which the replisome is built. The sequence is that of DNA replication complex GINS protein SLD5 from Xenopus laevis (African clawed frog).